The following is a 225-amino-acid chain: ATP synthase F(0) complex subunit a (225 aa).

6 helical membrane-spanning segments follow: residues 10–30 (PSLL…ILLL), 69–89 (LILI…LLPY), 96–116 (QLSM…LIGL), 135–155 (LLIP…PIAL), 168–188 (LLIQ…PPLS), and 194–214 (VLIL…YVFV).

This sequence belongs to the ATPase A chain family. Component of the ATP synthase complex composed at least of ATP5F1A/subunit alpha, ATP5F1B/subunit beta, ATP5MC1/subunit c (homooctomer), MT-ATP6/subunit a, MT-ATP8/subunit 8, ATP5ME/subunit e, ATP5MF/subunit f, ATP5MG/subunit g, ATP5MK/subunit k, ATP5MJ/subunit j, ATP5F1C/subunit gamma, ATP5F1D/subunit delta, ATP5F1E/subunit epsilon, ATP5PF/subunit F6, ATP5PB/subunit b, ATP5PD/subunit d, ATP5PO/subunit OSCP. ATP synthase complex consists of a soluble F(1) head domain (subunits alpha(3) and beta(3)) - the catalytic core - and a membrane F(0) domain - the membrane proton channel (subunits c, a, 8, e, f, g, k and j). These two domains are linked by a central stalk (subunits gamma, delta, and epsilon) rotating inside the F1 region and a stationary peripheral stalk (subunits F6, b, d, and OSCP). Interacts with DNAJC30; interaction is direct.

It is found in the mitochondrion inner membrane. The enzyme catalyses H(+)(in) = H(+)(out). Subunit a, of the mitochondrial membrane ATP synthase complex (F(1)F(0) ATP synthase or Complex V) that produces ATP from ADP in the presence of a proton gradient across the membrane which is generated by electron transport complexes of the respiratory chain. ATP synthase complex consist of a soluble F(1) head domain - the catalytic core - and a membrane F(1) domain - the membrane proton channel. These two domains are linked by a central stalk rotating inside the F(1) region and a stationary peripheral stalk. During catalysis, ATP synthesis in the catalytic domain of F(1) is coupled via a rotary mechanism of the central stalk subunits to proton translocation. With the subunit c (ATP5MC1), forms the proton-conducting channel in the F(0) domain, that contains two crucial half-channels (inlet and outlet) that facilitate proton movement from the mitochondrial intermembrane space (IMS) into the matrix. Protons are taken up via the inlet half-channel and released through the outlet half-channel, following a Grotthuss mechanism. The protein is ATP synthase F(0) complex subunit a of Alligator mississippiensis (American alligator).